The sequence spans 327 residues: DNA-directed RNA polymerase subunit alpha (327 aa).

Positions 1 to 233 are alpha N-terminal domain (alpha-NTD); it reads MVREKVKVST…NLFIPFLHVE (233 aa). The interval 265–327 is alpha C-terminal domain (alpha-CTD); sequence KELAFQYIFI…KKILDILEKK (63 aa).

This sequence belongs to the RNA polymerase alpha chain family. As to quaternary structure, in plastids the minimal PEP RNA polymerase catalytic core is composed of four subunits: alpha, beta, beta', and beta''. When a (nuclear-encoded) sigma factor is associated with the core the holoenzyme is formed, which can initiate transcription.

The protein resides in the plastid. Its subcellular location is the chloroplast. The enzyme catalyses RNA(n) + a ribonucleoside 5'-triphosphate = RNA(n+1) + diphosphate. Functionally, DNA-dependent RNA polymerase catalyzes the transcription of DNA into RNA using the four ribonucleoside triphosphates as substrates. The polypeptide is DNA-directed RNA polymerase subunit alpha (Olimarabidopsis pumila (Dwarf rocket)).